Reading from the N-terminus, the 315-residue chain is Small ribosomal subunit protein uS3 (315 aa).

A KH type-2 domain is found at 38–106; the sequence is IRKMMSRGME…QVQLNILEVK (69 aa). The segment at 211 to 315 is disordered; it reads AEREAQEALQ…VANTPEKAEE (105 aa). Basic residues predominate over residues 222–232; sequence QTRRERPRRGP. Residues 265–315 show a composition bias toward low complexity; the sequence is APAETPAGEAAATEPTAPVAEPATAAASAPAEAASAPAEAAVANTPEKAEE.

It belongs to the universal ribosomal protein uS3 family. Part of the 30S ribosomal subunit. Forms a tight complex with proteins S10 and S14.

Its function is as follows. Binds the lower part of the 30S subunit head. Binds mRNA in the 70S ribosome, positioning it for translation. The sequence is that of Small ribosomal subunit protein uS3 from Frankia casuarinae (strain DSM 45818 / CECT 9043 / HFP020203 / CcI3).